A 240-amino-acid chain; its full sequence is Aspartate/glutamate leucyltransferase (240 aa).

The protein belongs to the R-transferase family. Bpt subfamily.

Its subcellular location is the cytoplasm. The enzyme catalyses N-terminal L-glutamyl-[protein] + L-leucyl-tRNA(Leu) = N-terminal L-leucyl-L-glutamyl-[protein] + tRNA(Leu) + H(+). The catalysed reaction is N-terminal L-aspartyl-[protein] + L-leucyl-tRNA(Leu) = N-terminal L-leucyl-L-aspartyl-[protein] + tRNA(Leu) + H(+). Functions in the N-end rule pathway of protein degradation where it conjugates Leu from its aminoacyl-tRNA to the N-termini of proteins containing an N-terminal aspartate or glutamate. The polypeptide is Aspartate/glutamate leucyltransferase (Gluconobacter oxydans (strain 621H) (Gluconobacter suboxydans)).